Here is an 80-residue protein sequence, read N- to C-terminus: Secreted transmembrane peptide 3 (80 aa).

The first 27 residues, 1–27, serve as a signal peptide directing secretion; sequence MGLKMSSNALLLSLFLLLLCLFSEIGG. The interval 44–80 is disordered; that stretch reads IATPPSLTCGGQRLGGPQPRLSPCPRPRPRPRPRTGS. Residues 62 to 80 carry the SCOOP motif motif; sequence PRLSPCPRPRPRPRPRTGS. The segment covering 70 to 80 has biased composition (basic residues); it reads PRPRPRPRTGS.

This sequence belongs to the serine rich endogenous peptide (SCOOP) phytocytokine family. In terms of assembly, interacts with MIK2 (via extracellular leucine-rich repeat domain); this interaction triggers the formation of complex between MIK2 and the BAK1/SERK3 and SERK4 coreceptors, and subsequent BAK1 activation by phosphorylation. Mostly expressed in leaves, and, to a lower extent, in roots, stems, siliques, seeds and flowers.

The protein localises to the cell membrane. It is found in the secreted. It localises to the extracellular space. The protein resides in the apoplast. Its subcellular location is the endoplasmic reticulum. The protein localises to the golgi apparatus. In terms of biological role, brassicaceae-specific phytocytokine (plant endogenous peptide released into the apoplast) perceived by MIK2 in a BAK1/SERK3 and SERK4 coreceptors-dependent manner, that modulates various physiological and antimicrobial processes including growth prevention and reactive oxygen species (ROS) response regulation. This is Secreted transmembrane peptide 3 from Arabidopsis thaliana (Mouse-ear cress).